The chain runs to 570 residues: Sulfite reductase [NADPH] hemoprotein beta-component (570 aa).

Cys-434, Cys-440, Cys-479, and Cys-483 together coordinate [4Fe-4S] cluster. Cys-483 is a binding site for siroheme.

The protein belongs to the nitrite and sulfite reductase 4Fe-4S domain family. As to quaternary structure, alpha(8)-beta(8). The alpha component is a flavoprotein, the beta component is a hemoprotein. It depends on siroheme as a cofactor. [4Fe-4S] cluster is required as a cofactor.

The enzyme catalyses hydrogen sulfide + 3 NADP(+) + 3 H2O = sulfite + 3 NADPH + 4 H(+). The protein operates within sulfur metabolism; hydrogen sulfide biosynthesis; hydrogen sulfide from sulfite (NADPH route): step 1/1. Component of the sulfite reductase complex that catalyzes the 6-electron reduction of sulfite to sulfide. This is one of several activities required for the biosynthesis of L-cysteine from sulfate. This Klebsiella pneumoniae subsp. pneumoniae (strain ATCC 700721 / MGH 78578) protein is Sulfite reductase [NADPH] hemoprotein beta-component.